The chain runs to 56 residues: Small ribosomal subunit protein uS14 (56 aa).

Zn(2+) is bound by residues Cys21, Cys24, Cys39, and Cys42.

The protein belongs to the universal ribosomal protein uS14 family. Component of the 40S small ribosomal subunit. Requires Zn(2+) as cofactor.

The protein localises to the cytoplasm. The protein resides in the cytosol. Its subcellular location is the rough endoplasmic reticulum. The polypeptide is Small ribosomal subunit protein uS14 (RpS29) (Lonomia obliqua (Moth)).